A 154-amino-acid polypeptide reads, in one-letter code: Transcriptional repressor NrdR (154 aa).

A zinc finger lies at 3–34; that stretch reads CPFCRHPDSRVIDSRETDEGQAIRRRRSCPEC. The region spanning 46–136 is the ATP-cone domain; the sequence is LAVVKRSGVT…VYRSFSSADD (91 aa).

Belongs to the NrdR family. It depends on Zn(2+) as a cofactor.

Its function is as follows. Negatively regulates transcription of bacterial ribonucleotide reductase nrd genes and operons by binding to NrdR-boxes. The polypeptide is Transcriptional repressor NrdR (Mycobacterium bovis (strain ATCC BAA-935 / AF2122/97)).